The primary structure comprises 396 residues: Ribosomal RNA large subunit methyltransferase I (396 aa).

The region spanning 2 to 81 (SVRLVLAKGR…ESIDIAFFTR (80 aa)) is the PUA domain.

The protein belongs to the methyltransferase superfamily. RlmI family.

The protein localises to the cytoplasm. It carries out the reaction cytidine(1962) in 23S rRNA + S-adenosyl-L-methionine = 5-methylcytidine(1962) in 23S rRNA + S-adenosyl-L-homocysteine + H(+). Specifically methylates the cytosine at position 1962 (m5C1962) of 23S rRNA. The sequence is that of Ribosomal RNA large subunit methyltransferase I from Escherichia coli O1:K1 / APEC.